Reading from the N-terminus, the 75-residue chain is Putative antitoxin VapB29 (75 aa).

In terms of biological role, possibly the antitoxic component of a type II toxin-antitoxin (TA) system. Its cognate toxin is VapC29 (Potential). In Mycobacterium tuberculosis (strain CDC 1551 / Oshkosh), this protein is Putative antitoxin VapB29 (vapB29).